The following is a 551-amino-acid chain: Chaperonin GroEL (551 aa).

ATP-binding positions include 30–33 (TLGP), K51, 87–91 (DGTTT), G415, 481–483 (NAA), and D497.

This sequence belongs to the chaperonin (HSP60) family. Forms a cylinder of 14 subunits composed of two heptameric rings stacked back-to-back. Interacts with the co-chaperonin GroES.

It localises to the cytoplasm. The enzyme catalyses ATP + H2O + a folded polypeptide = ADP + phosphate + an unfolded polypeptide.. Its function is as follows. Together with its co-chaperonin GroES, plays an essential role in assisting protein folding. The GroEL-GroES system forms a nano-cage that allows encapsulation of the non-native substrate proteins and provides a physical environment optimized to promote and accelerate protein folding. The protein is Chaperonin GroEL of Magnetococcus marinus (strain ATCC BAA-1437 / JCM 17883 / MC-1).